Here is a 376-residue protein sequence, read N- to C-terminus: UDP-N-acetylglucosamine--N-acetylmuramyl-(pentapeptide) pyrophosphoryl-undecaprenol N-acetylglucosamine transferase (376 aa).

UDP-N-acetyl-alpha-D-glucosamine-binding positions include 14–16 (TGG), Asn128, Arg169, Ser201, Ile256, and Gln301.

It belongs to the glycosyltransferase 28 family. MurG subfamily.

The protein localises to the cell inner membrane. The enzyme catalyses di-trans,octa-cis-undecaprenyl diphospho-N-acetyl-alpha-D-muramoyl-L-alanyl-D-glutamyl-meso-2,6-diaminopimeloyl-D-alanyl-D-alanine + UDP-N-acetyl-alpha-D-glucosamine = di-trans,octa-cis-undecaprenyl diphospho-[N-acetyl-alpha-D-glucosaminyl-(1-&gt;4)]-N-acetyl-alpha-D-muramoyl-L-alanyl-D-glutamyl-meso-2,6-diaminopimeloyl-D-alanyl-D-alanine + UDP + H(+). It participates in cell wall biogenesis; peptidoglycan biosynthesis. Its function is as follows. Cell wall formation. Catalyzes the transfer of a GlcNAc subunit on undecaprenyl-pyrophosphoryl-MurNAc-pentapeptide (lipid intermediate I) to form undecaprenyl-pyrophosphoryl-MurNAc-(pentapeptide)GlcNAc (lipid intermediate II). The protein is UDP-N-acetylglucosamine--N-acetylmuramyl-(pentapeptide) pyrophosphoryl-undecaprenol N-acetylglucosamine transferase of Phocaeicola vulgatus (strain ATCC 8482 / DSM 1447 / JCM 5826 / CCUG 4940 / NBRC 14291 / NCTC 11154) (Bacteroides vulgatus).